The chain runs to 491 residues: Glutamate--tRNA ligase (491 aa).

The 'HIGH' region signature appears at 13 to 23 (PSPTGFLHIGN). Cysteine 110, cysteine 112, cysteine 137, and histidine 139 together coordinate Zn(2+). The 'KMSKS' region motif lies at 254–258 (KLSKR). Lysine 257 provides a ligand contact to ATP.

Belongs to the class-I aminoacyl-tRNA synthetase family. Glutamate--tRNA ligase type 1 subfamily. As to quaternary structure, monomer. It depends on Zn(2+) as a cofactor.

Its subcellular location is the cytoplasm. The catalysed reaction is tRNA(Glu) + L-glutamate + ATP = L-glutamyl-tRNA(Glu) + AMP + diphosphate. Functionally, catalyzes the attachment of glutamate to tRNA(Glu) in a two-step reaction: glutamate is first activated by ATP to form Glu-AMP and then transferred to the acceptor end of tRNA(Glu). In Listeria monocytogenes serotype 4b (strain F2365), this protein is Glutamate--tRNA ligase.